The sequence spans 487 residues: Proline--tRNA ligase (487 aa).

It belongs to the class-II aminoacyl-tRNA synthetase family. ProS type 3 subfamily. In terms of assembly, homodimer.

The protein localises to the cytoplasm. The catalysed reaction is tRNA(Pro) + L-proline + ATP = L-prolyl-tRNA(Pro) + AMP + diphosphate. Its function is as follows. Catalyzes the attachment of proline to tRNA(Pro) in a two-step reaction: proline is first activated by ATP to form Pro-AMP and then transferred to the acceptor end of tRNA(Pro). This Pyrobaculum neutrophilum (strain DSM 2338 / JCM 9278 / NBRC 100436 / V24Sta) (Thermoproteus neutrophilus) protein is Proline--tRNA ligase.